Consider the following 1070-residue polypeptide: MLGDGNEGISTIPGFNQIQFEGFCRFIDQGLTEELYKFPKIEDTDQEIEFQLFVETYQLVEPLIKERDAVYESLTYSSELYVSAGLIWKNSRDMQEQTFFIGNIPLMNSLGTSIVNGIYRIVINQILQSPGIYYRSELDHNGISVYTGTIISDWGGRSELEIDRKARIWARVSRKQKISILVLSSAMGLNLREILENVCYPEIFLSFLSDKERKKIGSKENAILEFYQQFACVGGDPVFSESLCKELQKKFFQQRCELGRIGRRNMNRRLNLDIPQNNTFLLPRDILAAADHLIGLKFGMGALDDMNHLKNKRIRSVADLLQDQFGLALVRLENVVRGTICGAIRHKLIPTPQNLVTSTPLTTTYESFFGLHPLSQVLDRTNPLTQIVHGRKLSYLGPGGLTGRTASFRIRDIHPSHYGRICPIDTSEGINVGLIGSLAIHAKIGHWGSLESPFYEISERSTGVRMLYLSPGRDEYYMVAAGNSLALNRDIQEEQVVPARYRQEFLTIAWEQVHLRSIFPFQYFSIGASLIPFIEHNDANRALMSSNMQRQAVPLSRSEKCIVGTGLERQAALDSGALAIAEREGRVVYTNTDKILLAGNGDILSIPLVIYQRSNKNTCMHQKLQVPRGKCIKKGQILADGAATVGGELALGKNVLVAYMPWEGYNSEDAVLISERLVYEDIYTSFHIRKYEIQTHVTSQGPEKVTNEIPHLEAHLLRNLDKNGIVMLGSWVETGDILVGKLTPQVVKESSYAPEDRLLRAILGIQVSTSKETCLKLLIGGRGRVIDVRWIQKRGGSSYNPETIRVYILQKREIKVGDKVAGRHGNKGIISKILPRQDMPYLQDGRSVDMVFNPLGVPSRMNVGQIFECSLGLAGSLLDRHYRIAPFDERYEQEASRKLVFSELYEASKQTANPWVFEPEYPGKSRIFDGRTGNPFEQPVIIGKPYILKLIHQVDDKIHGRSSGHYALVTQQPLRGRAKQGGQRVGEMEVWALEGFGVAHILQEMLTYKSDHIRARQEVLGTTIIGGTIPNPEDAPESFRLLVRELRSLALELNHFLVSEKNFQINRKEA.

It belongs to the RNA polymerase beta chain family. In terms of assembly, in plastids the minimal PEP RNA polymerase catalytic core is composed of four subunits: alpha, beta, beta', and beta''. When a (nuclear-encoded) sigma factor is associated with the core the holoenzyme is formed, which can initiate transcription.

The protein localises to the plastid. It is found in the chloroplast. The catalysed reaction is RNA(n) + a ribonucleoside 5'-triphosphate = RNA(n+1) + diphosphate. In terms of biological role, DNA-dependent RNA polymerase catalyzes the transcription of DNA into RNA using the four ribonucleoside triphosphates as substrates. The polypeptide is DNA-directed RNA polymerase subunit beta (Nicotiana tomentosiformis (Tobacco)).